The following is a 523-amino-acid chain: Keratin, type II cytoskeletal 71 (523 aa).

The interval 1 to 129 (MSRQFTCKSG…DPEIQKVRAQ (129 aa)) is head. Positions 130–165 (EREQIKALNNKFASFIDKVRFLEQQNQVLETKWELL) are coil 1A. One can recognise an IF rod domain in the interval 130–443 (EREQIKALNN…KLLESEECRM (314 aa)). The tract at residues 166-184 (QQLDLNNCKNNLEPILEGY) is linker 1. The segment at 185 to 276 (ISNLRKQLET…CLFEAEITQI (92 aa)) is coil 1B. A linker 12 region spans residues 277–300 (QSHISDMSVILSMDNNRNLDLDSI). Residues 301-439 (IDEVRTQYEE…ATYRKLLESE (139 aa)) form a coil 2 region. The tract at residues 440-523 (ECRMSGEFPS…LSAPSKKTSR (84 aa)) is tail. The interval 492–523 (GGEGRSRGSANDYKDTLGKGSSLSAPSKKTSR) is disordered. Residues 493–508 (GEGRSRGSANDYKDTL) show a composition bias toward basic and acidic residues. A compositionally biased stretch (polar residues) spans 510–523 (KGSSLSAPSKKTSR).

It belongs to the intermediate filament family. Heterodimer of a type I and a type II keratin. Associates with KRT16 and/or KRT17. In terms of tissue distribution, highly expressed in hair follicles from scalp. Specifically expressed in the inner root sheath (IRS) of the hair follicle. Present in the all 3 IRS layers: the cuticle, the Henle and the Huxley layers. Also detected in the pseudopods of specialized Huxley cells, termed Fluegelzellen, along the area of differentiated Henle cells (at protein level).

The protein localises to the cytoplasm. It localises to the cytoskeleton. Its function is as follows. Plays a central role in hair formation. Essential component of keratin intermediate filaments in the inner root sheath (IRS) of the hair follicle. This is Keratin, type II cytoskeletal 71 (KRT71) from Homo sapiens (Human).